The primary structure comprises 161 residues: Crossover junction endodeoxyribonuclease RuvC (161 aa).

Active-site residues include D9, E72, and D144. Residues D9, E72, and D144 each coordinate Mg(2+).

The protein belongs to the RuvC family. In terms of assembly, homodimer which binds Holliday junction (HJ) DNA. The HJ becomes 2-fold symmetrical on binding to RuvC with unstacked arms; it has a different conformation from HJ DNA in complex with RuvA. In the full resolvosome a probable DNA-RuvA(4)-RuvB(12)-RuvC(2) complex forms which resolves the HJ. Mg(2+) is required as a cofactor.

It localises to the cytoplasm. It carries out the reaction Endonucleolytic cleavage at a junction such as a reciprocal single-stranded crossover between two homologous DNA duplexes (Holliday junction).. Functionally, the RuvA-RuvB-RuvC complex processes Holliday junction (HJ) DNA during genetic recombination and DNA repair. Endonuclease that resolves HJ intermediates. Cleaves cruciform DNA by making single-stranded nicks across the HJ at symmetrical positions within the homologous arms, yielding a 5'-phosphate and a 3'-hydroxyl group; requires a central core of homology in the junction. The consensus cleavage sequence is 5'-(A/T)TT(C/G)-3'. Cleavage occurs on the 3'-side of the TT dinucleotide at the point of strand exchange. HJ branch migration catalyzed by RuvA-RuvB allows RuvC to scan DNA until it finds its consensus sequence, where it cleaves and resolves the cruciform DNA. In Synechococcus sp. (strain ATCC 27144 / PCC 6301 / SAUG 1402/1) (Anacystis nidulans), this protein is Crossover junction endodeoxyribonuclease RuvC.